Reading from the N-terminus, the 455-residue chain is Ribulose bisphosphate carboxylase large chain (455 aa).

Lys5 carries the N6,N6,N6-trimethyllysine modification. Substrate-binding residues include Asn114 and Thr164. The Proton acceptor role is filled by Lys166. A substrate-binding site is contributed by Lys168. Residues Lys192, Asp194, and Glu195 each coordinate Mg(2+). At Lys192 the chain carries N6-carboxylysine. The active-site Proton acceptor is the His285. Substrate contacts are provided by Arg286, His318, and Ser370.

The protein belongs to the RuBisCO large chain family. Type I subfamily. In terms of assembly, heterohexadecamer of 8 large chains and 8 small chains; disulfide-linked. The disulfide link is formed within the large subunit homodimers. The cofactor is Mg(2+). In terms of processing, the disulfide bond which can form in the large chain dimeric partners within the hexadecamer appears to be associated with oxidative stress and protein turnover.

Its subcellular location is the plastid. The protein localises to the chloroplast. The catalysed reaction is 2 (2R)-3-phosphoglycerate + 2 H(+) = D-ribulose 1,5-bisphosphate + CO2 + H2O. It catalyses the reaction D-ribulose 1,5-bisphosphate + O2 = 2-phosphoglycolate + (2R)-3-phosphoglycerate + 2 H(+). In terms of biological role, ruBisCO catalyzes two reactions: the carboxylation of D-ribulose 1,5-bisphosphate, the primary event in carbon dioxide fixation, as well as the oxidative fragmentation of the pentose substrate in the photorespiration process. Both reactions occur simultaneously and in competition at the same active site. The sequence is that of Ribulose bisphosphate carboxylase large chain from Lupinus microcarpus var. densiflorus (Whitewhorl lupine).